Here is a 1093-residue protein sequence, read N- to C-terminus: Regulator of nonsense transcripts 1 homolog (1093 aa).

Positions 42–79 (YGVYGGRGPRGNGRRRHDDDDNETEVLDDDDDESLASV) are disordered. Residues 61–75 (DDNETEVLDDDDDES) show a composition bias toward acidic residues. The 158-residue stretch at 95-252 (EKELPPHACA…AKLEEMWKEA (158 aa)) folds into the Upf1 CH-rich domain. The Zn(2+) site is built by Cys103, Cys106, Cys117, Cys120, Cys125, His135, His139, His145, Cys163, Cys166, Cys189, and Cys193. The interval 103–135 (CAYCGIHSPSSVVKCLTCNKWFCSAKGSAFSSH) is C3H. The segment at 117–145 (CLTCNKWFCSAKGSAFSSHIVNHLVRARH) is CC/SHH/C. The C4 stretch occupies residues 163 to 193 (CYNCGTKNVFILGFIPAKSDTVVVLLCRQPC). ATP is bound by residues Gln460, 480–484 (GTGKT), Gln650, Tyr687, and Glu818.

It belongs to the DNA2/NAM7 helicase family.

Its subcellular location is the cytoplasm. The enzyme catalyses ATP + H2O = ADP + phosphate + H(+). RNA-dependent helicase required for nonsense-mediated decay (NMD) of aberrant mRNAs containing premature stop codons and modulates the expression level of normal mRNAs. Also capable of unwinding double-stranded DNA and translocating on single-stranded DNA. The protein is Regulator of nonsense transcripts 1 homolog of Neurospora crassa (strain ATCC 24698 / 74-OR23-1A / CBS 708.71 / DSM 1257 / FGSC 987).